A 673-amino-acid polypeptide reads, in one-letter code: DNA topoisomerase 1 (673 aa).

The Toprim domain maps to 1–134 (MVAEKPKAAA…ARRMKFSTLA (134 aa)). Positions 4 and 103 each coordinate Mg(2+). The 420-residue stretch at 149–568 (DVEMIEAGMA…MSKKTISKLL (420 aa)) folds into the Topo IA-type catalytic domain. The segment at 189-194 (SAGRVQ) is interaction with DNA. Tyr-311 functions as the O-(5'-phospho-DNA)-tyrosine intermediate in the catalytic mechanism. The tract at residues 352 to 374 (LRPVQGSKDDPAHPAIHPTGEKP) is disordered. A C4-type zinc finger spans residues 595-615 (CHLCGRKAVSAVSGYRLCSHH).

This sequence belongs to the type IA topoisomerase family. In terms of assembly, monomer. Mg(2+) serves as cofactor.

The enzyme catalyses ATP-independent breakage of single-stranded DNA, followed by passage and rejoining.. Functionally, releases the supercoiling and torsional tension of DNA, which is introduced during the DNA replication and transcription, by transiently cleaving and rejoining one strand of the DNA duplex. Introduces a single-strand break via transesterification at a target site in duplex DNA. The scissile phosphodiester is attacked by the catalytic tyrosine of the enzyme, resulting in the formation of a DNA-(5'-phosphotyrosyl)-enzyme intermediate and the expulsion of a 3'-OH DNA strand. The free DNA strand then undergoes passage around the unbroken strand, thus removing DNA supercoils. Finally, in the religation step, the DNA 3'-OH attacks the covalent intermediate to expel the active-site tyrosine and restore the DNA phosphodiester backbone. This is DNA topoisomerase 1 from Aeropyrum pernix (strain ATCC 700893 / DSM 11879 / JCM 9820 / NBRC 100138 / K1).